The sequence spans 822 residues: DNA gyrase subunit A (822 aa).

In terms of domain architecture, Topo IIA-type catalytic spans 32–497 (LPDVRDGLKP…QVLSLEDEDL (466 aa)). The active-site O-(5'-phospho-DNA)-tyrosine intermediate is the Tyr-120. Positions 524-530 (QKRGGRG) match the GyrA-box motif.

Belongs to the type II topoisomerase GyrA/ParC subunit family. In terms of assembly, heterotetramer, composed of two GyrA and two GyrB chains. In the heterotetramer, GyrA contains the active site tyrosine that forms a transient covalent intermediate with DNA, while GyrB binds cofactors and catalyzes ATP hydrolysis.

Its subcellular location is the cytoplasm. It carries out the reaction ATP-dependent breakage, passage and rejoining of double-stranded DNA.. A type II topoisomerase that negatively supercoils closed circular double-stranded (ds) DNA in an ATP-dependent manner to modulate DNA topology and maintain chromosomes in an underwound state. Negative supercoiling favors strand separation, and DNA replication, transcription, recombination and repair, all of which involve strand separation. Also able to catalyze the interconversion of other topological isomers of dsDNA rings, including catenanes and knotted rings. Type II topoisomerases break and join 2 DNA strands simultaneously in an ATP-dependent manner. This chain is DNA gyrase subunit A, found in Streptococcus pneumoniae (strain ATCC BAA-255 / R6).